Reading from the N-terminus, the 250-residue chain is U6 snRNA phosphodiesterase 1 (250 aa).

The disordered stretch occupies residues 1–31; that stretch reads MALVSYSSSEEDEGETSEPPGRRLPPLPPPT. The span at 22–31 shows a compositional bias: pro residues; it reads RRLPPLPPPT. The active-site Proton acceptor is His-105. 105-107 is a binding site for AMP; that stretch reads HIS. UMP is bound by residues Gln-149, Tyr-187, and 191-195; that span reads SFHVS. AMP-binding positions include Tyr-187 and 189–195; that span reads EPSFHVS. The Proton donor role is filled by His-193.

This sequence belongs to the 2H phosphoesterase superfamily. USB1 family.

The protein resides in the nucleus. It carries out the reaction a 3'-end uridylyl-uridine-RNA = a 3'-end 2',3'-cyclophospho-uridine-RNA + uridine. The catalysed reaction is a 3'-end uridylyl-adenosine-RNA = a 3'-end 2',3'-cyclophospho-uridine-RNA + adenosine. 3'-5' RNA exonuclease that trims the 3' end of oligo(U) and oligo(A) tracts of the pre-U6 small nuclear RNA (snRNA) molecule, leading to the formation of a mature U6 snRNA 3' end-terminated with a 2',3'-cyclic phosphate. Participates in the U6 snRNA 3' end processing that prevents U6 snRNA degradation. In addition also removes uridines from the 3' end of U6atac snRNA and possibly the vault RNA VTRNA1-1. The protein is U6 snRNA phosphodiesterase 1 of Xenopus laevis (African clawed frog).